The chain runs to 218 residues: Phosphatidylserine decarboxylase proenzyme (218 aa).

The active-site Schiff-base intermediate with substrate; via pyruvic acid is Ser188. Ser188 is modified (pyruvic acid (Ser); by autocatalysis).

It belongs to the phosphatidylserine decarboxylase family. PSD-A subfamily. As to quaternary structure, heterodimer of a large membrane-associated beta subunit and a small pyruvoyl-containing alpha subunit. Requires pyruvate as cofactor. Post-translationally, is synthesized initially as an inactive proenzyme. Formation of the active enzyme involves a self-maturation process in which the active site pyruvoyl group is generated from an internal serine residue via an autocatalytic post-translational modification. Two non-identical subunits are generated from the proenzyme in this reaction, and the pyruvate is formed at the N-terminus of the alpha chain, which is derived from the carboxyl end of the proenzyme. The post-translation cleavage follows an unusual pathway, termed non-hydrolytic serinolysis, in which the side chain hydroxyl group of the serine supplies its oxygen atom to form the C-terminus of the beta chain, while the remainder of the serine residue undergoes an oxidative deamination to produce ammonia and the pyruvoyl prosthetic group on the alpha chain.

The protein localises to the cell membrane. The enzyme catalyses a 1,2-diacyl-sn-glycero-3-phospho-L-serine + H(+) = a 1,2-diacyl-sn-glycero-3-phosphoethanolamine + CO2. The protein operates within phospholipid metabolism; phosphatidylethanolamine biosynthesis; phosphatidylethanolamine from CDP-diacylglycerol: step 2/2. In terms of biological role, catalyzes the formation of phosphatidylethanolamine (PtdEtn) from phosphatidylserine (PtdSer). The polypeptide is Phosphatidylserine decarboxylase proenzyme (Streptomyces coelicolor (strain ATCC BAA-471 / A3(2) / M145)).